The following is a 298-amino-acid chain: GTP cyclohydrolase FolE2 (298 aa).

This sequence belongs to the GTP cyclohydrolase IV family.

The enzyme catalyses GTP + H2O = 7,8-dihydroneopterin 3'-triphosphate + formate + H(+). It functions in the pathway cofactor biosynthesis; 7,8-dihydroneopterin triphosphate biosynthesis; 7,8-dihydroneopterin triphosphate from GTP: step 1/1. Its function is as follows. Converts GTP to 7,8-dihydroneopterin triphosphate. This is GTP cyclohydrolase FolE2 from Neisseria meningitidis serogroup B (strain ATCC BAA-335 / MC58).